Reading from the N-terminus, the 154-residue chain is 3-hydroxyacyl-[acyl-carrier-protein] dehydratase FabZ (154 aa).

The active site involves His57.

This sequence belongs to the thioester dehydratase family. FabZ subfamily.

The protein localises to the cytoplasm. It catalyses the reaction a (3R)-hydroxyacyl-[ACP] = a (2E)-enoyl-[ACP] + H2O. In terms of biological role, involved in unsaturated fatty acids biosynthesis. Catalyzes the dehydration of short chain beta-hydroxyacyl-ACPs and long chain saturated and unsaturated beta-hydroxyacyl-ACPs. This Sinorhizobium medicae (strain WSM419) (Ensifer medicae) protein is 3-hydroxyacyl-[acyl-carrier-protein] dehydratase FabZ.